A 671-amino-acid chain; its full sequence is DNA ligase (671 aa).

NAD(+)-binding positions include 32 to 36 (DAEYD), 81 to 82 (SL), and glutamate 113. Lysine 115 functions as the N6-AMP-lysine intermediate in the catalytic mechanism. 4 residues coordinate NAD(+): arginine 136, glutamate 173, lysine 290, and lysine 314. Zn(2+) contacts are provided by cysteine 408, cysteine 411, cysteine 426, and cysteine 432. Positions 593 to 671 (EIDSPFAGKT…EAEMLRLFGE (79 aa)) constitute a BRCT domain.

It belongs to the NAD-dependent DNA ligase family. LigA subfamily. It depends on Mg(2+) as a cofactor. Mn(2+) is required as a cofactor.

It catalyses the reaction NAD(+) + (deoxyribonucleotide)n-3'-hydroxyl + 5'-phospho-(deoxyribonucleotide)m = (deoxyribonucleotide)n+m + AMP + beta-nicotinamide D-nucleotide.. Its function is as follows. DNA ligase that catalyzes the formation of phosphodiester linkages between 5'-phosphoryl and 3'-hydroxyl groups in double-stranded DNA using NAD as a coenzyme and as the energy source for the reaction. It is essential for DNA replication and repair of damaged DNA. In Enterobacter sp. (strain 638), this protein is DNA ligase.